We begin with the raw amino-acid sequence, 874 residues long: Alanine--tRNA ligase (874 aa).

Residues histidine 562, histidine 566, cysteine 663, and histidine 667 each coordinate Zn(2+).

The protein belongs to the class-II aminoacyl-tRNA synthetase family. Zn(2+) serves as cofactor.

It localises to the cytoplasm. It catalyses the reaction tRNA(Ala) + L-alanine + ATP = L-alanyl-tRNA(Ala) + AMP + diphosphate. Catalyzes the attachment of alanine to tRNA(Ala) in a two-step reaction: alanine is first activated by ATP to form Ala-AMP and then transferred to the acceptor end of tRNA(Ala). Also edits incorrectly charged Ser-tRNA(Ala) and Gly-tRNA(Ala) via its editing domain. In Bordetella pertussis (strain Tohama I / ATCC BAA-589 / NCTC 13251), this protein is Alanine--tRNA ligase.